Consider the following 186-residue polypeptide: Transcriptional repressor NrdR (186 aa).

A zinc finger lies at 3 to 34 (CPFCRHPDSRVVDSREAEEGAAIRRRRSCPAC). An ATP-cone domain is found at 46 to 136 (LRVRKRSGAT…VYLAFESLGD (91 aa)). The segment at 149–169 (AGGGEPPVAGKPTTMPAATGA) is disordered.

Belongs to the NrdR family. Requires Zn(2+) as cofactor.

Negatively regulates transcription of bacterial ribonucleotide reductase nrd genes and operons by binding to NrdR-boxes. This is Transcriptional repressor NrdR from Parafrankia sp. (strain EAN1pec).